A 394-amino-acid polypeptide reads, in one-letter code: Choline/ethanolamine kinase (394 aa).

Residues 1-42 (MAADGTGVVGGGAVGGGLPKDGLQDAKCPEPIPNRRRASSLS) form a disordered region. An N-acetylalanine modification is found at A2. Residues 7–19 (GVVGGGAVGGGLP) show a composition bias toward gly residues. ATP contacts are provided by residues 75-81 (SGGLSNL), R104, 146-152 (QYLPSRP), Q244, and D264. A substrate-binding site is contributed by 77 to 79 (GLS).

It belongs to the choline/ethanolamine kinase family. As to quaternary structure, homodimer, and heterodimer with CHKA. As to expression, expressed ubiquitously with the highest level in testis.

It catalyses the reaction choline + ATP = phosphocholine + ADP + H(+). The catalysed reaction is ethanolamine + ATP = phosphoethanolamine + ADP + H(+). Its pathway is phospholipid metabolism; phosphatidylethanolamine biosynthesis; phosphatidylethanolamine from ethanolamine: step 1/3. Has a key role in phospholipid metabolism, and catalyzes the first step of phosphatidylethanolamine and phosphatidylcholine biosynthesis. The polypeptide is Choline/ethanolamine kinase (Chkb) (Mus musculus (Mouse)).